The chain runs to 445 residues: Phosphoglucosamine mutase (445 aa).

S102 functions as the Phosphoserine intermediate in the catalytic mechanism. Residues S102, D241, D243, and D245 each contribute to the Mg(2+) site. S102 carries the post-translational modification Phosphoserine.

This sequence belongs to the phosphohexose mutase family. Mg(2+) serves as cofactor. In terms of processing, activated by phosphorylation.

The catalysed reaction is alpha-D-glucosamine 1-phosphate = D-glucosamine 6-phosphate. Catalyzes the conversion of glucosamine-6-phosphate to glucosamine-1-phosphate. The protein is Phosphoglucosamine mutase of Serratia proteamaculans (strain 568).